Consider the following 213-residue polypeptide: KHG/KDPG aldolase (213 aa).

The active-site Proton acceptor is E45. Residues R49, T73, and K133 each coordinate pyruvate. Residue K133 is the Schiff-base intermediate with substrate of the active site.

Belongs to the KHG/KDPG aldolase family. Homotrimer.

The protein resides in the cytoplasm. The catalysed reaction is 2-dehydro-3-deoxy-6-phospho-D-gluconate = D-glyceraldehyde 3-phosphate + pyruvate. It catalyses the reaction (4S)-4-hydroxy-2-oxoglutarate = glyoxylate + pyruvate. The protein operates within carbohydrate acid metabolism; 2-dehydro-3-deoxy-D-gluconate degradation; D-glyceraldehyde 3-phosphate and pyruvate from 2-dehydro-3-deoxy-D-gluconate: step 2/2. It functions in the pathway carbohydrate metabolism; glyoxylate and dicarboxylate metabolism. In terms of biological role, involved in the degradation of glucose via the Entner-Doudoroff pathway. Catalyzes the reversible, stereospecific retro-aldol cleavage of 2-keto-3-deoxy-6-phosphogluconate (KDPG) to pyruvate and D-glyceraldehyde-3-phosphate. In addition to its KDPG aldolase activity, catalyzes the reversible cleavage of 2-keto-4-hydroxyglutarate (KHG) to glyoxylate and pyruvate. The enzyme is stereoselective for the S-enantiomer of KHG. Cleavage of KHG could serve in tricarboxylic acid (TCA) cycle regulation or, when operating in the reverse direction, in the detoxification of glyoxylate. The sequence is that of KHG/KDPG aldolase (eda) from Escherichia coli O157:H7.